The following is a 173-amino-acid chain: Peptide deformylase (173 aa).

Fe cation contacts are provided by C98 and H140. E141 is an active-site residue. Residue H144 coordinates Fe cation.

Belongs to the polypeptide deformylase family. Fe(2+) serves as cofactor.

It catalyses the reaction N-terminal N-formyl-L-methionyl-[peptide] + H2O = N-terminal L-methionyl-[peptide] + formate. In terms of biological role, removes the formyl group from the N-terminal Met of newly synthesized proteins. Requires at least a dipeptide for an efficient rate of reaction. N-terminal L-methionine is a prerequisite for activity but the enzyme has broad specificity at other positions. This Caulobacter sp. (strain K31) protein is Peptide deformylase.